The chain runs to 266 residues: CD82 antigen (266 aa).

Topologically, residues 1 to 11 are cytoplasmic; sequence MGAGCVKVTKY. Residue Cys5 is the site of S-palmitoyl cysteine attachment. A helical transmembrane segment spans residues 12–32; that stretch reads FLFLFNLLFFILGAVILGFGV. Residues 33-53 are Extracellular-facing; it reads WILADKNSFISVLQTSSSSLQ. Residues 54–72 traverse the membrane as a helical segment; that stretch reads VGAYVFIGVGAITIVMGFL. The Cytoplasmic portion of the chain corresponds to 73–83; sequence GCIGAVNEVRC. Cys74 carries S-palmitoyl cysteine lipidation. The helical transmembrane segment at 84-110 threads the bilayer; the sequence is LLGLYFVFLLLILIAQVTVGVLFYFNA. Residues 111 to 227 are Extracellular-facing; sequence DKLKKEMGNT…KAQAWLQENF (117 aa). N-linked (GlcNAc...) asparagine glycosylation is found at Asn127, Asn131, Asn157, and Asn197. A helical transmembrane segment spans residues 228–249; sequence GILLGVCAGVAVIELLGLFLSI. The Cytoplasmic segment spans residues 250–266; the sequence is CLCRYIHSEDYSKVPKY.

It belongs to the tetraspanin (TM4SF) family. As to quaternary structure, forms homooligomers. Interacts directly with IGSF8. Interacts with EGFR. Interacts with VEGFA and PDGFA. Interacts with ITGA4. Interacts with ITGA6; this interaction reduces ITGA6 cell surface expression. Interacts with ITGB1. Interacts with TLR4; this interaction inhibits TLR4-mediated signaling pathway. Interacts with TLR9. Interacts with PLAUR. Post-translationally, palmitoylated. Palmitoylation contributes to oligomerization and surface expression. As to expression, highest expression in the spleen and the kidney. Low expression in skeletal muscle and in the heart.

The protein localises to the cell membrane. The protein resides in the cytoplasmic vesicle. It localises to the phagosome. Its function is as follows. Structural component of specialized membrane microdomains known as tetraspanin-enriched microdomains (TERMs), which act as platforms for receptor clustering and signaling. Participates thereby in diverse biological functions such as cell signal transduction, adhesion, migration and protein trafficking. Acts as a attenuator of EGF signaling, facilitating ligand-induced endocytosis of the receptor and its subsequent desensitization. Mechanistically, modulates ligand-induced ubiquitination and trafficking of EGFR via E3 ligase CBL phosphorylation by PKC. Increases cell-matrix adhesion by regulating the membrane organization of integrin alpha4/ITA4. Modulates adhesion and suppresses cell migration through other integrins such as the alpha6/ITGA6 and beta1/ITGB1. Decreases cell-associated plasminogen activation by interfering with the interaction between urokinase-type plasminogen activator/PLAU and its receptor PLAUR. Associates with CD4 or CD8 and delivers costimulatory signals for the TCR/CD3 pathway. Plays a role in the restrains phagocyte migration but supports macrophage activation. Plays a role in TLR9 trafficking to acidified CpG-containing compartments by controlling interaction between TLR9 and VAMP3 and subsequent myddosome assembly. Inhibits LPS-induced inflammatory response by preventing binding of LPS to TLR4 on the cell surface. Plays a role in the activation of macrophages into anti-inflammatory phenotypes. Independently of Toll-like receptor (TLR) signaling, is recruited to pathogen-containing phagosomes prior to fusion with lysosomes and participates in antigen presentation. Also acts to control angiogenesis and switch angiogenic milieu to quiescent state by binding and sequestering VEGFA and PDGFA to inhibit the signaling they trigger via their respective cell surface receptor. The chain is CD82 antigen (Cd82) from Mus musculus (Mouse).